We begin with the raw amino-acid sequence, 52 residues long: Ornatin-C (52 aa).

Positions R42–D44 match the Cell attachment site motif.

This sequence belongs to the ornatin family.

The protein resides in the secreted. Potent inhibitor of fibrinogen interaction with platelet receptors expressed on glycoprotein IIb-IIIa complex. May prevent blood from clotting during either feeding and/or storage of ingested blood. This Placobdella ornata (Turtle leech) protein is Ornatin-C.